The following is a 281-amino-acid chain: Protoheme IX farnesyltransferase (281 aa).

Transmembrane regions (helical) follow at residues 13 to 33, 38 to 58, 85 to 105, 107 to 127, 132 to 152, 161 to 181, 206 to 226, 227 to 247, and 261 to 281; these read VIWL…GPLV, LIEL…FNMY, ALTF…LWLG, WVTL…TIML, WLNI…GWIM, ILLS…LAYY, IISI…QLYM, AKLI…IVTI, and MFKA…ISRI.

It belongs to the UbiA prenyltransferase family. Protoheme IX farnesyltransferase subfamily.

It localises to the cell membrane. The enzyme catalyses heme b + (2E,6E)-farnesyl diphosphate + H2O = Fe(II)-heme o + diphosphate. It participates in porphyrin-containing compound metabolism; heme O biosynthesis; heme O from protoheme: step 1/1. Functionally, converts heme B (protoheme IX) to heme O by substitution of the vinyl group on carbon 2 of heme B porphyrin ring with a hydroxyethyl farnesyl side group. In Caldivirga maquilingensis (strain ATCC 700844 / DSM 13496 / JCM 10307 / IC-167), this protein is Protoheme IX farnesyltransferase.